Consider the following 141-residue polypeptide: Cystatin-SN (141 aa).

An N-terminal signal peptide occupies residues 1 to 20; the sequence is MAQYLSTLLLLLATLAVALA. Positions 76–80 match the Secondary area of contact motif; sequence QTVGG. 2 cysteine pairs are disulfide-bonded: Cys94–Cys104 and Cys118–Cys138.

It belongs to the cystatin family. In terms of tissue distribution, expressed in submandibular and sublingual saliva but not in parotid saliva (at protein level). Expressed in saliva, tears, urine and seminal fluid.

It is found in the secreted. Its function is as follows. Human saliva appears to contain several cysteine proteinase inhibitors that are immunologically related to cystatin S but that differ in their specificity due to amino acid sequence differences. Cystatin SN, with a pI of 7.5, is a much better inhibitor of papain and dipeptidyl peptidase I than is cystatin S, although both inhibit ficin equally well. The chain is Cystatin-SN (CST1) from Homo sapiens (Human).